The following is a 143-amino-acid chain: Nucleoside diphosphate kinase (143 aa).

ATP is bound by residues K11, F59, R87, T93, R104, and N114. H117 functions as the Pros-phosphohistidine intermediate in the catalytic mechanism.

This sequence belongs to the NDK family. In terms of assembly, homotetramer. Mg(2+) serves as cofactor.

Its subcellular location is the cytoplasm. The enzyme catalyses a 2'-deoxyribonucleoside 5'-diphosphate + ATP = a 2'-deoxyribonucleoside 5'-triphosphate + ADP. It carries out the reaction a ribonucleoside 5'-diphosphate + ATP = a ribonucleoside 5'-triphosphate + ADP. Its function is as follows. Major role in the synthesis of nucleoside triphosphates other than ATP. The ATP gamma phosphate is transferred to the NDP beta phosphate via a ping-pong mechanism, using a phosphorylated active-site intermediate. The polypeptide is Nucleoside diphosphate kinase (Cronobacter sakazakii (strain ATCC BAA-894) (Enterobacter sakazakii)).